The following is a 178-amino-acid chain: Small ribosomal subunit protein uS4 (178 aa).

One can recognise an S4 RNA-binding domain in the interval 104–166 (RRLQTMVYKK…PNSPMASENH (63 aa)). Residues 157-178 (PNSPMASENHPERTAAVSEENQ) form a disordered region.

Belongs to the universal ribosomal protein uS4 family. Part of the 30S ribosomal subunit. Contacts protein S5. The interaction surface between S4 and S5 is involved in control of translational fidelity.

In terms of biological role, one of the primary rRNA binding proteins, it binds directly to 16S rRNA where it nucleates assembly of the body of the 30S subunit. Functionally, with S5 and S12 plays an important role in translational accuracy. The polypeptide is Small ribosomal subunit protein uS4 (Methanococcus maripaludis (strain C7 / ATCC BAA-1331)).